A 231-amino-acid polypeptide reads, in one-letter code: Small ribosomal subunit protein uS3 (231 aa).

In terms of domain architecture, KH type-2 spans 38-106; sequence IRVYLKNRLK…KTFVNIMEIK (69 aa).

It belongs to the universal ribosomal protein uS3 family. In terms of assembly, part of the 30S ribosomal subunit. Forms a tight complex with proteins S10 and S14.

Functionally, binds the lower part of the 30S subunit head. Binds mRNA in the 70S ribosome, positioning it for translation. This Endomicrobium trichonymphae protein is Small ribosomal subunit protein uS3.